A 627-amino-acid polypeptide reads, in one-letter code: tRNA uridine 5-carboxymethylaminomethyl modification enzyme MnmG (627 aa).

FAD contacts are provided by residues 16 to 21 (GAGHAG), Val128, and Ser183. An NAD(+)-binding site is contributed by 277–291 (GPRYCPSIEDKIVRF). Residue Gln374 participates in FAD binding.

This sequence belongs to the MnmG family. In terms of assembly, homodimer. Heterotetramer of two MnmE and two MnmG subunits. It depends on FAD as a cofactor.

The protein resides in the cytoplasm. Its function is as follows. NAD-binding protein involved in the addition of a carboxymethylaminomethyl (cmnm) group at the wobble position (U34) of certain tRNAs, forming tRNA-cmnm(5)s(2)U34. The sequence is that of tRNA uridine 5-carboxymethylaminomethyl modification enzyme MnmG from Finegoldia magna (strain ATCC 29328 / DSM 20472 / WAL 2508) (Peptostreptococcus magnus).